The primary structure comprises 140 residues: NADPH-dependent 7-cyano-7-deazaguanine reductase (140 aa).

C49 functions as the Thioimide intermediate in the catalytic mechanism. D56 functions as the Proton donor in the catalytic mechanism. Residues 71-73 (IEL) and 90-91 (HE) contribute to the substrate site.

Belongs to the GTP cyclohydrolase I family. QueF type 1 subfamily.

The protein localises to the cytoplasm. It carries out the reaction 7-aminomethyl-7-carbaguanine + 2 NADP(+) = 7-cyano-7-deazaguanine + 2 NADPH + 3 H(+). Its pathway is tRNA modification; tRNA-queuosine biosynthesis. Functionally, catalyzes the NADPH-dependent reduction of 7-cyano-7-deazaguanine (preQ0) to 7-aminomethyl-7-deazaguanine (preQ1). The chain is NADPH-dependent 7-cyano-7-deazaguanine reductase from Prochlorococcus marinus (strain NATL2A).